The chain runs to 405 residues: Cysteine desulfurase IscS (405 aa).

Residues 75 to 76 (AT), N156, Q184, and 204 to 206 (SAH) each bind pyridoxal 5'-phosphate. The residue at position 207 (K207) is an N6-(pyridoxal phosphate)lysine. T244 contributes to the pyridoxal 5'-phosphate binding site. C329 serves as the catalytic Cysteine persulfide intermediate. Residue C329 participates in [2Fe-2S] cluster binding.

This sequence belongs to the class-V pyridoxal-phosphate-dependent aminotransferase family. NifS/IscS subfamily. As to quaternary structure, homodimer. Forms a heterotetramer with IscU, interacts with other sulfur acceptors. Pyridoxal 5'-phosphate is required as a cofactor.

The protein resides in the cytoplasm. It catalyses the reaction (sulfur carrier)-H + L-cysteine = (sulfur carrier)-SH + L-alanine. Its pathway is cofactor biosynthesis; iron-sulfur cluster biosynthesis. Its function is as follows. Master enzyme that delivers sulfur to a number of partners involved in Fe-S cluster assembly, tRNA modification or cofactor biosynthesis. Catalyzes the removal of elemental sulfur atoms from cysteine to produce alanine. Functions as a sulfur delivery protein for Fe-S cluster synthesis onto IscU, an Fe-S scaffold assembly protein, as well as other S acceptor proteins. In Acinetobacter baumannii (strain AB307-0294), this protein is Cysteine desulfurase IscS.